The primary structure comprises 160 residues: Nucleotide-binding protein Tgr7_1196 (160 aa).

Belongs to the YajQ family.

Nucleotide-binding protein. The chain is Nucleotide-binding protein Tgr7_1196 from Thioalkalivibrio sulfidiphilus (strain HL-EbGR7).